We begin with the raw amino-acid sequence, 378 residues long: Beta-1,3-galactosyltransferase pvg3 (378 aa).

Residues 1–8 (MFSNSKKK) lie on the Cytoplasmic side of the membrane. The chain crosses the membrane as a helical; Signal-anchor for type II membrane protein span at residues 9–29 (IFLYVLIAGVATFSFAFLVLN). Over 30-378 (RLQAEEHSLA…ATIPLPSLDV (349 aa)) the chain is Lumenal. Asn53, Asn97, Asn180, and Asn354 each carry an N-linked (GlcNAc...) asparagine glycan.

Belongs to the glycosyltransferase 31 family.

It is found in the endoplasmic reticulum membrane. The protein resides in the golgi apparatus. It localises to the golgi stack membrane. It carries out the reaction 3-O-(beta-D-galactosyl-(1-&gt;4)-beta-D-xylosyl)-L-seryl-[protein] + UDP-alpha-D-galactose = 3-O-(beta-D-galactosyl-(1-&gt;3)-beta-D-galactosyl-(1-&gt;4)-beta-D-xylosyl)-L-seryl-[protein] + UDP + H(+). Functionally, involved in cell wall biogenesis. Has a role in the addition of Gal-beta1,3 moeities to galactomannans and their subsequent pyruvylation. Has a role in meiosis. This is Beta-1,3-galactosyltransferase pvg3 (pvg3) from Schizosaccharomyces pombe (strain 972 / ATCC 24843) (Fission yeast).